A 581-amino-acid polypeptide reads, in one-letter code: DNA primase (581 aa).

The CHC2-type zinc finger occupies 40 to 64 (CPFHNEKTPSFTVNGEKQFYHCFGC). A Toprim domain is found at 259–341 (NRLLVVEGYM…GRQLRFMFLP (83 aa)). Residues Glu-265, Asp-309, and Asp-311 each contribute to the Mg(2+) site.

It belongs to the DnaG primase family. As to quaternary structure, monomer. Interacts with DnaB. It depends on Zn(2+) as a cofactor. Mg(2+) is required as a cofactor.

The catalysed reaction is ssDNA + n NTP = ssDNA/pppN(pN)n-1 hybrid + (n-1) diphosphate.. In terms of biological role, RNA polymerase that catalyzes the synthesis of short RNA molecules used as primers for DNA polymerase during DNA replication. The protein is DNA primase of Escherichia coli O6:H1 (strain CFT073 / ATCC 700928 / UPEC).